Here is a 337-residue protein sequence, read N- to C-terminus: 3-isopropylmalate dehydrogenase (337 aa).

Substrate is bound by residues arginine 88, arginine 98, arginine 122, and aspartate 212. Residues aspartate 212, aspartate 236, and aspartate 240 each contribute to the Mg(2+) site. 272–284 contributes to the NAD(+) binding site; the sequence is GSAPDIAGKGIAD.

The protein belongs to the isocitrate and isopropylmalate dehydrogenases family. LeuB type 2 subfamily. As to quaternary structure, homodimer. It depends on Mg(2+) as a cofactor. The cofactor is Mn(2+).

The protein localises to the cytoplasm. The enzyme catalyses (2R,3S)-3-isopropylmalate + NAD(+) = 4-methyl-2-oxopentanoate + CO2 + NADH. It functions in the pathway amino-acid biosynthesis; L-leucine biosynthesis; L-leucine from 3-methyl-2-oxobutanoate: step 3/4. Catalyzes the oxidation of 3-carboxy-2-hydroxy-4-methylpentanoate (3-isopropylmalate) to 3-carboxy-4-methyl-2-oxopentanoate. The product decarboxylates to 4-methyl-2 oxopentanoate. In Rhodococcus erythropolis (strain PR4 / NBRC 100887), this protein is 3-isopropylmalate dehydrogenase.